Reading from the N-terminus, the 256-residue chain is MMNTRALLPLSVLLMATLCLCELPIPILQRFVRSVPEECPIADPSDFKFSITSNRNKTGHWTAQVRLEHGEHEQSGSNQHNRDLWQVDLEQTTTTCAGVKSVQIITTITAPPPTAAPSIPPGYELSAVLGYYKFHKTPKTWDEARIICQQEGGHLVIINSEDESKVLQNLFSKVTKTEGATNNDYIFIGIHDRFVEGEFITIFGKPLATTGFTRWVDSIQPDNAGGNENCGSMHPNGGLNDIPCPWKLPFVCEVEL.

Positions Met1–Cys21 are cleaved as a signal peptide. The propeptide occupies Glu22 to Arg33. Asn56 carries an N-linked (GlcNAc...) asparagine glycan. Residues Ile146–Leu256 form the C-type lectin domain. 2 cysteine pairs are disulfide-bonded: Cys148–Cys252 and Cys230–Cys244.

Hemolymph.

Its subcellular location is the secreted. Functionally, participates probably in the elimination of foreign substances invading the insect abdominal cavity, and in trapping intracellular symbionts, when they leak from the mycetomes into the hemolymph. This chain is Hemolymph lipopolysaccharide-binding protein, found in Periplaneta americana (American cockroach).